The following is a 402-amino-acid chain: Type II NADH:quinone oxidoreductase (402 aa).

FAD-binding positions include 12–16, 39–40, and Val-83; these read GAGYA and NK. Residue Glu-172 is part of the active site. FAD is bound by residues Asp-302, 319–320, and Lys-379; that span reads AQ.

Belongs to the NADH dehydrogenase family. It depends on FAD as a cofactor.

It is found in the cell membrane. The enzyme catalyses a quinone + NADH + H(+) = a quinol + NAD(+). Functionally, alternative, nonproton pumping NADH:quinone oxidoreductase that delivers electrons to the respiratory chain by oxidation of NADH and reduction of quinones, and contributes to the regeneration of NAD(+). This chain is Type II NADH:quinone oxidoreductase, found in Staphylococcus aureus (strain bovine RF122 / ET3-1).